Here is a 315-residue protein sequence, read N- to C-terminus: Uracil-DNA glycosylase (315 aa).

The segment covering 35-80 has biased composition (low complexity); the sequence is AAAAAPAGAGAGASKPARPPAAARPAKGTPAASAATTATGADASAP. The interval 35 to 88 is disordered; the sequence is AAAAAPAGAGAGASKPARPPAAARPAKGTPAASAATTATGADASAPAPDPGAPT. The Proton acceptor role is filled by Asp158.

It belongs to the uracil-DNA glycosylase (UDG) superfamily. UNG family.

Its subcellular location is the host nucleus. It carries out the reaction Hydrolyzes single-stranded DNA or mismatched double-stranded DNA and polynucleotides, releasing free uracil.. In terms of biological role, excises uracil residues from the DNA which can arise as a result of misincorporation of dUMP residues by DNA polymerase or deamination of cytosines. Therefore may reduce deleterious uracil incorporation into the viral genome, particularly in terminally differentiated cells which lack DNA repair enzymes. The protein is Uracil-DNA glycosylase (UL2) of Suid herpesvirus 1 (strain Indiana-Funkhauser / Becker) (SuHV-1).